We begin with the raw amino-acid sequence, 260 residues long: Ribosomal RNA small subunit methyltransferase J (260 aa).

S-adenosyl-L-methionine is bound by residues 108–109, 124–125, and aspartate 178; these read RD and ER.

It belongs to the methyltransferase superfamily. RsmJ family.

It localises to the cytoplasm. It catalyses the reaction guanosine(1516) in 16S rRNA + S-adenosyl-L-methionine = N(2)-methylguanosine(1516) in 16S rRNA + S-adenosyl-L-homocysteine + H(+). Functionally, specifically methylates the guanosine in position 1516 of 16S rRNA. This Ectopseudomonas mendocina (strain ymp) (Pseudomonas mendocina) protein is Ribosomal RNA small subunit methyltransferase J.